A 412-amino-acid polypeptide reads, in one-letter code: Ornithine cyclodeaminase (412 aa).

Asn-237, Ala-238, Asp-316, Thr-348, Met-349, Leu-350, His-351, Asp-369, Asp-392, and Val-393 together coordinate NAD(+).

Belongs to the AgrE/ArgZ ornithine cyclodeaminase family. NAD(+) serves as cofactor.

The enzyme catalyses L-ornithine = L-proline + NH4(+). Catalyzes the conversion of ornithine to proline, with the release of ammonia. The chain is Ornithine cyclodeaminase from Methanopyrus kandleri (strain AV19 / DSM 6324 / JCM 9639 / NBRC 100938).